A 195-amino-acid polypeptide reads, in one-letter code: MTKIIGLTGGIASGKSTVTKIIRESGFKVIDADQVVHKLQAKGGKLYQALLEWLGPEILDADGELDRPKLSQMIFANPDNMKTSARLQNSIIRQELACQRDQLKQTEEIFFVDIPLLIEEKYIKWFDEIWLVFVDKEKQLQRLMARNNYSREEAELRLSHQMPLTDKKSFASLIINNNGDLITLKEQILDALQRL.

One can recognise a DPCK domain in the interval 4–195; that stretch reads IIGLTGGIAS…EQILDALQRL (192 aa). 12-17 contacts ATP; the sequence is ASGKST.

This sequence belongs to the CoaE family.

The protein resides in the cytoplasm. The catalysed reaction is 3'-dephospho-CoA + ATP = ADP + CoA + H(+). The protein operates within cofactor biosynthesis; coenzyme A biosynthesis; CoA from (R)-pantothenate: step 5/5. Functionally, catalyzes the phosphorylation of the 3'-hydroxyl group of dephosphocoenzyme A to form coenzyme A. This is Dephospho-CoA kinase from Streptococcus agalactiae serotype III (strain NEM316).